The following is a 208-amino-acid chain: NAD(P)H-quinone oxidoreductase subunit I (208 aa).

2 4Fe-4S ferredoxin-type domains span residues G55 to V84 and R95 to E124. The [4Fe-4S] cluster site is built by C64, C67, C70, C74, C104, C107, C110, and C114.

This sequence belongs to the complex I 23 kDa subunit family. NDH-1 is composed of at least 11 different subunits. [4Fe-4S] cluster serves as cofactor.

It is found in the cellular thylakoid membrane. The catalysed reaction is a plastoquinone + NADH + (n+1) H(+)(in) = a plastoquinol + NAD(+) + n H(+)(out). It catalyses the reaction a plastoquinone + NADPH + (n+1) H(+)(in) = a plastoquinol + NADP(+) + n H(+)(out). In terms of biological role, NDH-1 shuttles electrons from an unknown electron donor, via FMN and iron-sulfur (Fe-S) centers, to quinones in the respiratory and/or the photosynthetic chain. The immediate electron acceptor for the enzyme in this species is believed to be plastoquinone. Couples the redox reaction to proton translocation, and thus conserves the redox energy in a proton gradient. The chain is NAD(P)H-quinone oxidoreductase subunit I from Prochlorococcus marinus (strain AS9601).